The chain runs to 1895 residues: Diacylglycerol kinase eta (1895 aa).

A compositionally biased stretch (basic and acidic residues) spans 1-10 (MAHLKLDTLH). Positions 1 to 37 (MAHLKLDTLHVQRSPRGSRRSSPSSGRSSACSSGSIS) are disordered. Low complexity predominate over residues 20–37 (RSSPSSGRSSACSSGSIS). The PH domain occupies 82-175 (AIIKEGFLLK…WLGSLKTATA (94 aa)). 2 Phorbol-ester/DAG-type zinc fingers span residues 195-245 (HHHW…IANC) and 267-318 (PHQW…AVAC). The region spanning 349 to 485 (GNFSPLLVFV…DRWSIMVFEK (137 aa)) is the DAGKc domain. 4 disordered regions span residues 781–801 (ANIDDAGNRLSPCSDAGENTP), 1012–1053 (TTLC…MARL), 1113–1137 (QHRGGDNDSDYPEHEQTPTNKGANL), and 1172–1191 (PNTILTTSTSPTKKSGHGQD). A compositionally biased stretch (basic and acidic residues) spans 1113–1128 (QHRGGDNDSDYPEHEQ). Residues 1172–1184 (PNTILTTSTSPTK) are compositionally biased toward polar residues. In terms of domain architecture, SAM spans 1832 to 1895 (WSVNEVVTWL…LQAIKDLSEN (64 aa)).

This sequence belongs to the eukaryotic diacylglycerol kinase family.

The protein resides in the cytoplasm. The enzyme catalyses a 1,2-diacyl-sn-glycerol + ATP = a 1,2-diacyl-sn-glycero-3-phosphate + ADP + H(+). Phosphorylates diacylglycerol (DAG) to generate phosphatidic acid (PA). The protein is Diacylglycerol kinase eta of Drosophila melanogaster (Fruit fly).